Consider the following 377-residue polypeptide: Probable purine permease 22 (377 aa).

10 helical membrane-spanning segments follow: residues 39-59 (WLRV…ATVL), 71-91 (TYVV…FRFF), 107-127 (SPSF…VSAY), 128-148 (AYLS…LILA), 166-186 (FTPL…LLVV), 202-222 (VIGF…LSLI), 238-258 (VLDL…IGLF), 283-303 (TLAS…GLIF), 309-329 (FSNS…VIVF), and 338-358 (IFSI…HYLD).

This sequence belongs to the purine permeases (TC 2.A.7.14) family.

The protein resides in the membrane. The protein is Probable purine permease 22 (PUP22) of Arabidopsis thaliana (Mouse-ear cress).